The following is a 283-amino-acid chain: 4-diphosphocytidyl-2-C-methyl-D-erythritol kinase (283 aa).

Residue lysine 10 is part of the active site. 99–109 (PMGGGLGGGSS) lines the ATP pocket. Residue aspartate 141 is part of the active site.

Belongs to the GHMP kinase family. IspE subfamily. As to quaternary structure, homodimer.

The catalysed reaction is 4-CDP-2-C-methyl-D-erythritol + ATP = 4-CDP-2-C-methyl-D-erythritol 2-phosphate + ADP + H(+). It participates in isoprenoid biosynthesis; isopentenyl diphosphate biosynthesis via DXP pathway; isopentenyl diphosphate from 1-deoxy-D-xylulose 5-phosphate: step 3/6. Catalyzes the phosphorylation of the position 2 hydroxy group of 4-diphosphocytidyl-2C-methyl-D-erythritol. This chain is 4-diphosphocytidyl-2-C-methyl-D-erythritol kinase, found in Shigella boydii serotype 18 (strain CDC 3083-94 / BS512).